The following is a 200-amino-acid chain: Methyl-coenzyme M reductase I operon protein C (200 aa).

As to quaternary structure, MCR is composed of three subunits: alpha, beta, and gamma. The function of proteins C and D is not known.

The sequence is that of Methyl-coenzyme M reductase I operon protein C (mcrC) from Methanocaldococcus jannaschii (strain ATCC 43067 / DSM 2661 / JAL-1 / JCM 10045 / NBRC 100440) (Methanococcus jannaschii).